We begin with the raw amino-acid sequence, 699 residues long: MAKSKVVEKDKKNELDNQSADIELKGQSKNEESKGGKKKVIIVESPAKAKTIERILGNDYQVISSKGHIRDLPQKQFGVDLNSLKLDFEIIPGKESVVEQIKKMTSGKEVLLPSDQDREGEAIAWHLSTILGVKGKNIITFTEITERAIKEAVKNPREIDMNKVNAQLARRVLDRIVGYMISPLLWRIIKDARSAGRVQSAALKIICERERERYRFVPQKYFKVWIDIAGLKAYLTKVDGKKIKPTDITEEISKDVLQKVKSVRLVDIDVKEVRKNPPAPFITSTLQQDAASKLGFPVSKTMKIAQELYEGVDTKEGHTAFITYMRTDSTRVSDVAKEAAEKFILKNFGREYLNESSEVASKKGSKTKGKVQDAHECIRPVDVNITPEKAKELLDKDHHKLYELIWKRFIASQMSSAIYKQYSYDFESGKYVFEASIRERIFDGFEKVYTIDNEPSEKHKELKVDQEYLVEPKSAEAQTTPPDRYTEASLVKTLEMEGIGRPSTYATIIQTLLDRGYVVKKRKTLIPTILGFVVNHYLEQRFPDIVDKGFTAEMEKELDEVENGKKDWKEVVKSFLKEFNKDLERAKNEFFAIDFDTDITCEDCSGNYKLKVGKYGLYLHCPNCKTNKALKSDVFGVIDGNKLYVLEEQESQEENGEKNSVQSEESSANSGNRKFYRKRRTSGSKKSSTKSASSKAKKK.

Basic and acidic residues-rich tracts occupy residues Met1–Leu15 and Ile22–Gly35. A disordered region spans residues Met1–Lys37. The Toprim domain occupies Lys38 to Glu146. 2 residues coordinate Mg(2+): Glu44 and Asp115. Residues Asp160–Leu583 form the Topo IA-type catalytic domain. Positions Ser194 to Gln199 are interaction with DNA. The active-site O-(5'-phospho-DNA)-tyrosine intermediate is Tyr324. The C4-type zinc-finger motif lies at Cys601–Cys624. The segment at Gln649 to Lys699 is disordered. The span at Val661–Asn672 shows a compositional bias: polar residues. A compositionally biased stretch (basic residues) spans Lys674–Gly683. Residues Ser684–Lys699 show a composition bias toward low complexity.

The protein belongs to the type IA topoisomerase family. As to quaternary structure, monomer. Requires Mg(2+) as cofactor.

It carries out the reaction ATP-independent breakage of single-stranded DNA, followed by passage and rejoining.. In terms of biological role, releases the supercoiling and torsional tension of DNA, which is introduced during the DNA replication and transcription, by transiently cleaving and rejoining one strand of the DNA duplex. Introduces a single-strand break via transesterification at a target site in duplex DNA. The scissile phosphodiester is attacked by the catalytic tyrosine of the enzyme, resulting in the formation of a DNA-(5'-phosphotyrosyl)-enzyme intermediate and the expulsion of a 3'-OH DNA strand. The free DNA strand then undergoes passage around the unbroken strand, thus removing DNA supercoils. Finally, in the religation step, the DNA 3'-OH attacks the covalent intermediate to expel the active-site tyrosine and restore the DNA phosphodiester backbone. In Fervidobacterium islandicum, this protein is DNA topoisomerase 1.